The chain runs to 189 residues: Recombination protein RecR (189 aa).

Residues 48–63 (CQTCFHLSAEPLCDIC) form a C4-type zinc finger. Residues 71-165 (QLLCVVADSR…QVSRIAYGLP (95 aa)) enclose the Toprim domain.

The protein belongs to the RecR family.

May play a role in DNA repair. It seems to be involved in an RecBC-independent recombinational process of DNA repair. It may act with RecF and RecO. The sequence is that of Recombination protein RecR from Prochlorococcus marinus (strain MIT 9303).